The sequence spans 568 residues: Type 2 DNA topoisomerase 6 subunit B (568 aa).

ATP is bound by residues Asn46, Asp78, 99–100 (TK), 109–116 (GQQGIGIS), and Lys473.

Belongs to the TOP6B family. Homodimer. Heterotetramer of two Top6A and two Top6B chains.

The enzyme catalyses ATP-dependent breakage, passage and rejoining of double-stranded DNA.. Its function is as follows. Relaxes both positive and negative superturns and exhibits a strong decatenase activity. The chain is Type 2 DNA topoisomerase 6 subunit B from Pyrococcus furiosus (strain ATCC 43587 / DSM 3638 / JCM 8422 / Vc1).